Here is a 238-residue protein sequence, read N- to C-terminus: Phosphoribosylaminoimidazole-succinocarboxamide synthase (238 aa).

This sequence belongs to the SAICAR synthetase family.

The catalysed reaction is 5-amino-1-(5-phospho-D-ribosyl)imidazole-4-carboxylate + L-aspartate + ATP = (2S)-2-[5-amino-1-(5-phospho-beta-D-ribosyl)imidazole-4-carboxamido]succinate + ADP + phosphate + 2 H(+). Its pathway is purine metabolism; IMP biosynthesis via de novo pathway; 5-amino-1-(5-phospho-D-ribosyl)imidazole-4-carboxamide from 5-amino-1-(5-phospho-D-ribosyl)imidazole-4-carboxylate: step 1/2. The chain is Phosphoribosylaminoimidazole-succinocarboxamide synthase from Methanococcoides burtonii (strain DSM 6242 / NBRC 107633 / OCM 468 / ACE-M).